We begin with the raw amino-acid sequence, 98 residues long: Integration host factor subunit alpha (98 aa).

The tract at residues 49–70 (FGNFDLRDKNQRPGRNPKTGED) is disordered.

It belongs to the bacterial histone-like protein family. Heterodimer of an alpha and a beta chain.

Functionally, this protein is one of the two subunits of integration host factor, a specific DNA-binding protein that functions in genetic recombination as well as in transcriptional and translational control. This is Integration host factor subunit alpha from Yersinia pestis.